The chain runs to 475 residues: Membrane-bound lytic murein transglycosylase F (475 aa).

A signal peptide spans 1-30 (MKKLKINYLFIGILTLLLAAALWPSIPWFG). The tract at residues 31-269 (KTENHIAAIQ…RIEEKYLGHG (239 aa)) is non-LT domain. The interval 270-475 (DDFDYVDTRS…MKLAQDYPAV (206 aa)) is LT domain. Glutamate 314 is a catalytic residue.

In the N-terminal section; belongs to the bacterial solute-binding protein 3 family. The protein in the C-terminal section; belongs to the transglycosylase Slt family.

It is found in the cell outer membrane. The enzyme catalyses Exolytic cleavage of the (1-&gt;4)-beta-glycosidic linkage between N-acetylmuramic acid (MurNAc) and N-acetylglucosamine (GlcNAc) residues in peptidoglycan, from either the reducing or the non-reducing ends of the peptidoglycan chains, with concomitant formation of a 1,6-anhydrobond in the MurNAc residue.. Functionally, murein-degrading enzyme that degrades murein glycan strands and insoluble, high-molecular weight murein sacculi, with the concomitant formation of a 1,6-anhydromuramoyl product. Lytic transglycosylases (LTs) play an integral role in the metabolism of the peptidoglycan (PG) sacculus. Their lytic action creates space within the PG sacculus to allow for its expansion as well as for the insertion of various structures such as secretion systems and flagella. This chain is Membrane-bound lytic murein transglycosylase F, found in Salmonella typhi.